A 601-amino-acid polypeptide reads, in one-letter code: Translation initiation factor IF-2 (601 aa).

The disordered stretch occupies residues 54-101; sequence GHTASAEPAPAQASGSPASPAQTEAQEAPQPTATATAEREPAAPPARE. Positions 57–89 are enriched in low complexity; sequence ASAEPAPAQASGSPASPAQTEAQEAPQPTATAT. The tr-type G domain maps to 104–273; sequence HRAPVVTIMG…SLTAELEDLR (170 aa). The interval 113-120 is G1; sequence GHVDHGKT. 113–120 provides a ligand contact to GTP; sequence GHVDHGKT. The G2 stretch occupies residues 138–142; that stretch reads GITQH. Positions 159 to 162 are G3; it reads DTPG. GTP-binding positions include 159 to 163 and 213 to 216; these read DTPGH and NKVD. The tract at residues 213–216 is G4; it reads NKVD. Positions 249–251 are G5; that stretch reads SAK.

Belongs to the TRAFAC class translation factor GTPase superfamily. Classic translation factor GTPase family. IF-2 subfamily.

It is found in the cytoplasm. Functionally, one of the essential components for the initiation of protein synthesis. Protects formylmethionyl-tRNA from spontaneous hydrolysis and promotes its binding to the 30S ribosomal subunits. Also involved in the hydrolysis of GTP during the formation of the 70S ribosomal complex. The protein is Translation initiation factor IF-2 of Deinococcus geothermalis (strain DSM 11300 / CIP 105573 / AG-3a).